Here is a 172-residue protein sequence, read N- to C-terminus: Adenine phosphoribosyltransferase (172 aa).

This sequence belongs to the purine/pyrimidine phosphoribosyltransferase family. In terms of assembly, homodimer.

The protein resides in the cytoplasm. The enzyme catalyses AMP + diphosphate = 5-phospho-alpha-D-ribose 1-diphosphate + adenine. It participates in purine metabolism; AMP biosynthesis via salvage pathway; AMP from adenine: step 1/1. Functionally, catalyzes a salvage reaction resulting in the formation of AMP, that is energically less costly than de novo synthesis. This is Adenine phosphoribosyltransferase from Clostridium botulinum (strain Eklund 17B / Type B).